We begin with the raw amino-acid sequence, 287 residues long: Mitochondrial glycine transporter A (287 aa).

Solcar repeat units lie at residues 7–97, 104–188, and 198–282; these read HPAV…LKQR, PGPL…TKHL, and YAPV…LMAQ. 6 consecutive transmembrane segments (helical) span residues 13-38, 72-98, 110-135, 163-186, 202-228, and 257-275; these read FMCGSLSGTCSTLLFQPLDLVKTRLQ, GVSPSFVRCIPGVGIYFSTYFTLKQRY, VLLGAGARCVAGVFMLPVTVIKTRFE, GLMATLLRDAPFSGIYVMIYSQTK, ANFSCGVLAGVLASVLTQPADVVKTHI, and GAVPRSLRRTMMAAMAWTV.

This sequence belongs to the mitochondrial carrier (TC 2.A.29) family. SLC25A38 subfamily. As to expression, at 24 hours post-fertilization, expressed predominantly in posterior blood island, posterior cardinal vein and circulating blood, as well as in somites, brain and retina. At 34 hours post-fertilization, becomes restricted to posterior blood island and circulating blood.

It is found in the mitochondrion inner membrane. The enzyme catalyses glycine(in) = glycine(out). In terms of biological role, mitochondrial glycine transporter that imports glycine into the mitochondrial matrix. Plays an important role in providing glycine for the first enzymatic step in heme biosynthesis, the condensation of glycine with succinyl-CoA to produce 5-aminolevulinate (ALA) in the mitochondrial matrix. Required during erythropoiesis. Functionally, may play a role as pro-apoptotic protein that induces caspase-dependent apoptosis. In Danio rerio (Zebrafish), this protein is Mitochondrial glycine transporter A (slc25a38a).